The chain runs to 285 residues: 2-dehydro-3-deoxyphosphooctonate aldolase (285 aa).

This sequence belongs to the KdsA family.

The protein localises to the cytoplasm. The catalysed reaction is D-arabinose 5-phosphate + phosphoenolpyruvate + H2O = 3-deoxy-alpha-D-manno-2-octulosonate-8-phosphate + phosphate. It participates in carbohydrate biosynthesis; 3-deoxy-D-manno-octulosonate biosynthesis; 3-deoxy-D-manno-octulosonate from D-ribulose 5-phosphate: step 2/3. The protein operates within bacterial outer membrane biogenesis; lipopolysaccharide biosynthesis. The sequence is that of 2-dehydro-3-deoxyphosphooctonate aldolase from Variovorax paradoxus (strain S110).